Consider the following 198-residue polypeptide: MAPARLFALLLFFVGGVAESIRETEVIDPQDLLEGRYFSGALPDDEDVVGPGQESDDFELSGSGDLDDLEDSMIGPEVVHPLVPLDNHIPERAGSGSQVPTEPKKLEENEVIPKRISPVEESEDVSNKVSMSSTVQGSNIFERTEVLAALIVGGIVGILFAVFLILLLMYRMKKKDEGSYDLGKKPIYKKAPTNEFYA.

The signal sequence occupies residues 1–18; sequence MAPARLFALLLFFVGGVA. The Extracellular portion of the chain corresponds to 19–145; the sequence is ESIRETEVID…QGSNIFERTE (127 aa). 3 O-linked (Xyl...) (glycosaminoglycan) serine glycosylation sites follow: Ser-39, Ser-61, and Ser-63. A glycan (O-linked (Xyl...) (chondroitin sulfate) serine) is linked at Ser-95. A helical membrane pass occupies residues 146–170; the sequence is VLAALIVGGIVGILFAVFLILLLMY. Over 171-198 the chain is Cytoplasmic; the sequence is RMKKKDEGSYDLGKKPIYKKAPTNEFYA.

It belongs to the syndecan proteoglycan family. In terms of assembly, homodimer. Interacts (via its cytoplasmic domain) with GIPC (via its PDZ domain). Interacts (via its cytoplasmic domain) with NUDT16L1. Interacts with CDCP1 and SDCBP. Interacts with DNM2; this interaction is markedly enhanced at focal ahesion site upon induction of focal adhesions and stress-fiber formation. Shedding is enhanced by a number of factors such as heparanase, thrombin or EGF. Also by stress and wound healing. PMA-mediated shedding is inhibited by TIMP3. In terms of processing, O-glycosylated; contains both chondroitin sulfate and heparan sulfate. Ser-39, Ser-61 and Ser-63 can all be modified by either chondroitin sulfate or heparan sulfate, and the protein exists in forms that contain only chondroitin sulfate, only heparan sulfate and both chondroitin sulfate and heparan sulfate. In terms of tissue distribution, detected in fibroblasts (at protein level). Also expressed in epithelial cells.

Its subcellular location is the membrane. It is found in the secreted. Functionally, cell surface proteoglycan which regulates exosome biogenesis in concert with SDCBP and PDCD6IP. The sequence is that of Syndecan-4 from Homo sapiens (Human).